The sequence spans 307 residues: Nicotinamide/nicotinic acid mononucleotide adenylyltransferase 2 (307 aa).

The NAD(+) site is built by S16 and F17. H24 lines the ATP pocket. 7 residues coordinate NAD(+): W92, T95, G200, D202, L212, W213, and R232. T271–R274 serves as a coordination point for ATP.

It belongs to the eukaryotic NMN adenylyltransferase family. As to quaternary structure, monomer. Mg(2+) is required as a cofactor.

It is found in the golgi apparatus membrane. The protein localises to the cytoplasmic vesicle membrane. It localises to the cytoplasm. Its subcellular location is the cell projection. The protein resides in the axon. The enzyme catalyses beta-nicotinamide D-ribonucleotide + ATP + H(+) = diphosphate + NAD(+). The catalysed reaction is nicotinate beta-D-ribonucleotide + ATP + H(+) = deamido-NAD(+) + diphosphate. It functions in the pathway cofactor biosynthesis; NAD(+) biosynthesis; NAD(+) from nicotinamide D-ribonucleotide: step 1/1. Its pathway is cofactor biosynthesis; NAD(+) biosynthesis; deamido-NAD(+) from nicotinate D-ribonucleotide: step 1/1. Nicotinamide/nicotinate-nucleotide adenylyltransferase that acts as an axon maintenance factor. Axon survival factor required for the maintenance of healthy axons: acts by delaying Wallerian axon degeneration, an evolutionarily conserved process that drives the loss of damaged axons. Catalyzes the formation of NAD(+) from nicotinamide mononucleotide (NMN) and ATP. Can also use the deamidated form; nicotinic acid mononucleotide (NaMN) as substrate but with a lower efficiency. Also catalyzes the reverse reaction, i.e. the pyrophosphorolytic cleavage of NAD(+). For the pyrophosphorolytic activity prefers NAD(+), NADH and NaAD as substrates and degrades nicotinic acid adenine dinucleotide phosphate (NHD) less effectively. Also acts as an activator of ADP-ribosylation by supporting the catalytic activity of PARP16 and promoting mono-ADP-ribosylation of ribosomes by PARP16. May be involved in the maintenance of axonal integrity. This is Nicotinamide/nicotinic acid mononucleotide adenylyltransferase 2 (nmnat2) from Xenopus tropicalis (Western clawed frog).